We begin with the raw amino-acid sequence, 253 residues long: Bridging integrator 3 (253 aa).

The 224-residue stretch at glycine 9–glutamine 232 folds into the BAR domain. 2 coiled-coil regions span residues valine 16–lysine 57 and serine 120–threonine 151. The segment at glutamine 222–leucine 241 is disordered. The segment covering glycine 227–leucine 241 has biased composition (basic and acidic residues).

The protein localises to the cytoplasm. Its subcellular location is the cytoskeleton. In terms of biological role, involved in cytokinesis and septation where it has a role in the localization of F-actin. The polypeptide is Bridging integrator 3 (Bin3) (Mus musculus (Mouse)).